Consider the following 312-residue polypeptide: Glutathione synthetase (312 aa).

Positions 125 to 309 (KIFVTEFPDL…IAALFWDAVE (185 aa)) constitute an ATP-grasp domain. 151–207 (RREFGDIILKPLYGNGGAGVFHLADGDRNLTSLLEMFGQLFREPFIAQRYLKDVRAG) provides a ligand contact to ATP. Residues E280 and N282 each contribute to the Mg(2+) site.

The protein belongs to the prokaryotic GSH synthase family. Requires Mg(2+) as cofactor. Mn(2+) is required as a cofactor.

The catalysed reaction is gamma-L-glutamyl-L-cysteine + glycine + ATP = glutathione + ADP + phosphate + H(+). It participates in sulfur metabolism; glutathione biosynthesis; glutathione from L-cysteine and L-glutamate: step 2/2. The protein is Glutathione synthetase of Brucella melitensis biotype 1 (strain ATCC 23456 / CCUG 17765 / NCTC 10094 / 16M).